The sequence spans 85 residues: Large ribosomal subunit protein bL31B (85 aa).

It belongs to the bacterial ribosomal protein bL31 family. Type B subfamily. As to quaternary structure, part of the 50S ribosomal subunit.

In Clavibacter michiganensis subsp. michiganensis (strain NCPPB 382), this protein is Large ribosomal subunit protein bL31B.